Consider the following 307-residue polypeptide: MTDSTYDVTRVRTYLQGLQTRIADALGALDGTPLATDTWQRGPAERLRGGGCTRILEGGRVFERAGIGFSDVAGDALPPSASAARPQLAGRGFEALGVSLVLHPRNPYCPTVHMNVRMLIATKPGEAPVFWFGGGMDLTPVYGFEDDARHFHQTCKDALDPFGAELYPRFKQWCDEYFFLKHRNETRGIGGIFFDDFSEPGFERSFDLMQSVGDAFLHAYLPIVERRAELPYGERERDFQAYRRGRYVEFNLVFDRGTLFGLQSGGRTESILMSMPPVANWRYNWQPEPDSPEARLYSDFLVPRDWV.

Position 99 (Ser99) interacts with substrate. A divalent metal cation is bound by residues His103 and His113. His113 functions as the Proton donor in the catalytic mechanism. 115 to 117 (NVR) serves as a coordination point for substrate. A divalent metal cation is bound by residues His152 and His182. The segment at 247-282 (YVEFNLVFDRGTLFGLQSGGRTESILMSMPPVANWR) is important for dimerization. Residue 265-267 (GGR) participates in substrate binding.

This sequence belongs to the aerobic coproporphyrinogen-III oxidase family. In terms of assembly, homodimer. A divalent metal cation is required as a cofactor.

The protein localises to the cytoplasm. The enzyme catalyses coproporphyrinogen III + O2 + 2 H(+) = protoporphyrinogen IX + 2 CO2 + 2 H2O. It functions in the pathway porphyrin-containing compound metabolism; protoporphyrin-IX biosynthesis; protoporphyrinogen-IX from coproporphyrinogen-III (O2 route): step 1/1. Its function is as follows. Involved in the heme biosynthesis. Catalyzes the aerobic oxidative decarboxylation of propionate groups of rings A and B of coproporphyrinogen-III to yield the vinyl groups in protoporphyrinogen-IX. The protein is Oxygen-dependent coproporphyrinogen-III oxidase of Burkholderia orbicola (strain MC0-3).